The chain runs to 541 residues: Zinc finger protein 513 (541 aa).

Positions 1 to 118 (MPRRKQSHPQ…GEARGERPGP (118 aa)) are disordered. Positions 44 to 55 (LEFEEEEEEDEG) are enriched in acidic residues. Residues serine 85 and serine 96 each carry the phosphoserine modification. A compositionally biased stretch (basic and acidic residues) spans 103-115 (EPARGPGEARGER). 8 consecutive C2H2-type zinc fingers follow at residues 150–172 (YSCR…MQTH), 178–200 (FRCG…TRTH), 206–228 (YRCP…QRTH), 360–382 (FACS…MKTH), 388–410 (FRCA…QRVH), 416–438 (YKCP…GRIH), 444–466 (FRCS…MLRH), and 472–494 (FRCA…QKVH). The disordered stretch occupies residues 492 to 541 (KVHGHGGAGGPGLSAPEGWAPPHSPPSVLSTRGPAALGATGSRALHSDSP).

It belongs to the krueppel C2H2-type zinc-finger protein family. Binds DNA. Can associate with the proximal promoter regions of PAX6 and SP4, and their known targets including ARR3, RHO, OPN1MW2 and OPN1SW. As to expression, widely expressed. In the eye, expression is greatest in the retina and least in the lens and cornea.

The protein resides in the nucleus. Its function is as follows. Transcriptional regulator that plays a role in retinal development and maintenance. The polypeptide is Zinc finger protein 513 (Znf513) (Mus musculus (Mouse)).